The sequence spans 308 residues: Putative T-box protein 30/42 (308 aa).

The T-box DNA-binding region spans M11 to E192. The disordered stretch occupies residues T186–V220.

Its subcellular location is the nucleus. Its function is as follows. Involved in the regulatory network to control embryonic patterning and morphogenesis. Implicated in negatively regulating vab-7 expression at the anterior of embryos. The chain is Putative T-box protein 30/42 (tbx-30) from Caenorhabditis elegans.